Reading from the N-terminus, the 569-residue chain is Cytosolic purine 5'-nucleotidase (569 aa).

Aspartate 52 acts as the Nucleophile in catalysis. 2 residues coordinate IMP: aspartate 52 and aspartate 54. Aspartate 52 and aspartate 54 together coordinate Mg(2+). Aspartate 54 (proton donor) is an active-site residue. ATP contacts are provided by arginine 144 and asparagine 154. 7 residues coordinate IMP: arginine 202, aspartate 206, lysine 215, threonine 249, asparagine 250, serine 251, and lysine 292. Aspartate 351 lines the Mg(2+) pocket. Positions 453 and 456 each coordinate ATP. The disordered stretch occupies residues 527–569; the sequence is SISEIKPPNLFPQAPQEITHCHDEDDDEEEEEEEVEEEEEEEE. The tract at residues 548 to 569 is required for tetramer assembly; sequence HDEDDDEEEEEEEVEEEEEEEE. The span at 550–569 shows a compositional bias: acidic residues; that stretch reads EDDDEEEEEEEVEEEEEEEE.

The protein belongs to the 5'(3')-deoxyribonucleotidase family. As to quaternary structure, homotetramer. Mg(2+) is required as a cofactor.

The protein resides in the cytoplasm. It is found in the cytosol. The catalysed reaction is a ribonucleoside 5'-phosphate + H2O = a ribonucleoside + phosphate. It catalyses the reaction a 2'-deoxyribonucleoside + a ribonucleoside 5'-phosphate = a ribonucleoside + a 2'-deoxyribonucleoside 5'-phosphate. The enzyme catalyses IMP + H2O = inosine + phosphate. It carries out the reaction GMP + H2O = guanosine + phosphate. The catalysed reaction is dGMP + H2O = 2'-deoxyguanosine + phosphate. It catalyses the reaction dIMP + H2O = 2'-deoxyinosine + phosphate. The enzyme catalyses XMP + H2O = xanthosine + phosphate. It carries out the reaction inosine + GMP = guanosine + IMP. The catalysed reaction is dGMP + inosine = 2'-deoxyguanosine + IMP. It catalyses the reaction dIMP + inosine = 2'-deoxyinosine + IMP. The enzyme catalyses inosine + UMP = uridine + IMP. It carries out the reaction inosine + CMP = cytidine + IMP. The catalysed reaction is inosine + AMP = IMP + adenosine. Allosterically activated by various compounds including ATP, 2,3-BPG/2,3-Bisphosphoglyceric acid and Ap4A/P1,P4-bis(5'-adenosyl) tetraphosphate. Binding of an allosteric activator is a prerequisiste to magnesium and substrate binding. Inhibited by inorganic phosphate. Inhibited by inosine, guanosine, p-chloromercuribenzoate and NaF. Broad specificity cytosolic 5'-nucleotidase that catalyzes the dephosphorylation of 6-hydroxypurine nucleoside 5'-monophosphates. In addition, possesses a phosphotransferase activity by which it can transfer a phosphate from a donor nucleoside monophosphate to an acceptor nucleoside, preferably inosine, deoxyinosine and guanosine. Has the highest activities for IMP and GMP followed by dIMP, dGMP and XMP. Could also catalyze the transfer of phosphates from pyrimidine monophosphates but with lower efficiency. Through these activities regulates the purine nucleoside/nucleotide pools within the cell. The polypeptide is Cytosolic purine 5'-nucleotidase (NT5C2) (Gallus gallus (Chicken)).